The primary structure comprises 601 residues: Polypeptide N-acetylgalactosaminyltransferase 11 (601 aa).

Topologically, residues 1-7 (MGSAALR) are cytoplasmic. A helical; Signal-anchor for type II membrane protein transmembrane segment spans residues 8 to 28 (CFCYGCLFTSVTWTLLLFIYF). Residues N29 and N202 are each glycosylated (N-linked (GlcNAc...) asparagine). Residues 29 to 601 (NFSEESQGFR…SPSQQWHLEN (573 aa)) lie on the Lumenal side of the membrane. The interval 143–254 (LPMASIVICF…EMWLQPLLAP (112 aa)) is catalytic subdomain A. The interval 312–374 (PFRSPTMAGG…PCSRVGHIFR (63 aa)) is catalytic subdomain B. One can recognise a Ricin B-type lectin domain in the interval 469–600 (RPKILQRGRL…GSPSQQWHLE (132 aa)). C486 and C505 form a disulfide bridge. Residue N508 is glycosylated (N-linked (GlcNAc...) asparagine). 2 cysteine pairs are disulfide-bonded: C529–C546 and C571–C589.

Belongs to the glycosyltransferase 2 family. GalNAc-T subfamily. As to quaternary structure, interacts with notch1. It depends on Mn(2+) as a cofactor. Ca(2+) serves as cofactor.

It is found in the golgi apparatus membrane. It carries out the reaction L-seryl-[protein] + UDP-N-acetyl-alpha-D-galactosamine = a 3-O-[N-acetyl-alpha-D-galactosaminyl]-L-seryl-[protein] + UDP + H(+). It catalyses the reaction L-threonyl-[protein] + UDP-N-acetyl-alpha-D-galactosamine = a 3-O-[N-acetyl-alpha-D-galactosaminyl]-L-threonyl-[protein] + UDP + H(+). It participates in protein modification; protein glycosylation. Its function is as follows. Polypeptide N-acetylgalactosaminyltransferase that catalyzes the initiation of protein O-linked glycosylation and is involved in left/right asymmetry by mediating O-glycosylation of NOTCH1. O-glycosylation of NOTCH1 promotes activation of NOTCH1, modulating the balance between motile and immotile (sensory) cilia at the left-right organiser (LRO). Polypeptide N-acetylgalactosaminyltransferases catalyze the transfer of an N-acetyl-D-galactosamine residue to a serine or threonine residue on the protein receptor. The protein is Polypeptide N-acetylgalactosaminyltransferase 11 (galnt11) of Xenopus tropicalis (Western clawed frog).